A 429-amino-acid polypeptide reads, in one-letter code: 3-phosphoshikimate 1-carboxyvinyltransferase (429 aa).

Residues Lys23, Ser24, and Arg28 each coordinate 3-phosphoshikimate. Residue Lys23 coordinates phosphoenolpyruvate. Gly95 and Arg123 together coordinate phosphoenolpyruvate. Residues Ser168, Gln170, Asp316, and Lys343 each coordinate 3-phosphoshikimate. Gln170 contributes to the phosphoenolpyruvate binding site. Residue Asp316 is the Proton acceptor of the active site. Phosphoenolpyruvate contacts are provided by Arg347 and Arg389.

Belongs to the EPSP synthase family. As to quaternary structure, monomer.

The protein localises to the cytoplasm. The catalysed reaction is 3-phosphoshikimate + phosphoenolpyruvate = 5-O-(1-carboxyvinyl)-3-phosphoshikimate + phosphate. It participates in metabolic intermediate biosynthesis; chorismate biosynthesis; chorismate from D-erythrose 4-phosphate and phosphoenolpyruvate: step 6/7. In terms of biological role, catalyzes the transfer of the enolpyruvyl moiety of phosphoenolpyruvate (PEP) to the 5-hydroxyl of shikimate-3-phosphate (S3P) to produce enolpyruvyl shikimate-3-phosphate and inorganic phosphate. The polypeptide is 3-phosphoshikimate 1-carboxyvinyltransferase (Bacillus cereus (strain G9842)).